Here is a 243-residue protein sequence, read N- to C-terminus: NAD-dependent protein deacetylase (243 aa).

In terms of domain architecture, Deacetylase sirtuin-type spans 1–243; that stretch reads MKHDLETLKH…VSVVKSLMTE (243 aa). NAD(+)-binding residues include alanine 24, phenylalanine 35, arginine 36, glutamine 105, isoleucine 107, aspartate 108, and histidine 123. Position 35 (phenylalanine 35) interacts with nicotinamide. Nicotinamide contacts are provided by isoleucine 107 and aspartate 108. Histidine 123 functions as the Proton acceptor in the catalytic mechanism. The Zn(2+) site is built by cysteine 131, cysteine 134, cysteine 151, and cysteine 154. Positions 192, 193, 215, and 232 each coordinate NAD(+).

Belongs to the sirtuin family. Class U subfamily. Zn(2+) is required as a cofactor.

It localises to the cytoplasm. The catalysed reaction is N(6)-acetyl-L-lysyl-[protein] + NAD(+) + H2O = 2''-O-acetyl-ADP-D-ribose + nicotinamide + L-lysyl-[protein]. NAD-dependent protein deacetylase which modulates the activities of several enzymes which are inactive in their acetylated form. The protein is NAD-dependent protein deacetylase of Staphylococcus aureus (strain NCTC 8325 / PS 47).